The sequence spans 461 residues: Tumor necrosis factor receptor superfamily member 1A (461 aa).

A signal peptide spans 1–29; it reads MGLSTVPGLLLPLVLRALLVDVYPAGVHG. At 30 to 210 the chain is on the extracellular side; the sequence is LVLHPGDREK…RNDFQDTGTT (181 aa). TNFR-Cys repeat units follow at residues 43 to 82, 83 to 125, 126 to 166, and 167 to 195; these read LCPQ…TDCR, ECDN…DTVC, GCRK…DTIC, and NCHS…NLCP. Disulfide bonds link cysteine 44-cysteine 58, cysteine 59-cysteine 72, cysteine 62-cysteine 81, cysteine 84-cysteine 99, cysteine 102-cysteine 117, cysteine 105-cysteine 125, and cysteine 127-cysteine 143. Asparagine 54 carries N-linked (GlcNAc...) asparagine glycosylation. Asparagine 86 is a glycosylation site (N-linked (GlcNAc...) asparagine). N-linked (GlcNAc...) asparagine glycosylation is found at asparagine 145 and asparagine 151. 5 cysteine pairs are disulfide-bonded: cysteine 146–cysteine 158, cysteine 149–cysteine 166, cysteine 168–cysteine 179, cysteine 182–cysteine 194, and cysteine 185–cysteine 190. Residues 211–233 traverse the membrane as a helical segment; the sequence is VLLPLVIFFGLCLAFFLFVGLAC. At 234–461 the chain is on the cytoplasmic side; sequence RYQRWKPKLY…RLAPAPHLLR (228 aa). An N-SMase activation domain (NSD) region spans residues 340–350; sequence LPKWGGSAHSA. The region spanning 362–447 is the Death domain; the sequence is PATLYAVVDG…GCLEDIEEAL (86 aa).

Binding of TNF to the extracellular domain leads to homotrimerization. The aggregated death domains provide a novel molecular interface that interacts specifically with the death domain of TRADD. Various TRADD-interacting proteins such as TRAFS, RIPK1 and possibly FADD, are recruited to the complex by their association with TRADD. This complex activates at least two distinct signaling cascades, apoptosis and NF-kappa-B signaling. Interacts with BAG4, BABAM2, FEM1B, GRB2, SQSTM1 and TRPC4AP. Interacts with DAB2IP. Interacts directly with NOL3 (via CARD domain); inhibits TNF-signaling pathway. Interacts with SH3RF2, TRADD and RIPK1. SH3RF2 facilitates the recruitment of RIPK1 and TRADD to TNFRSF1A in a TNF-alpha-dependent process. Interacts with PGLYRP1; this interaction is important for cell death induction. Interacts (via death domain) with MADD (via death domain).

The protein localises to the cell membrane. The protein resides in the golgi apparatus membrane. Receptor for TNFSF2/TNF-alpha and homotrimeric TNFSF1/lymphotoxin-alpha. The adapter molecule FADD recruits caspase-8 to the activated receptor. The resulting death-inducing signaling complex (DISC) performs caspase-8 proteolytic activation which initiates the subsequent cascade of caspases (aspartate-specific cysteine proteases) mediating apoptosis. This Sus scrofa (Pig) protein is Tumor necrosis factor receptor superfamily member 1A (TNFRSF1A).